A 410-amino-acid chain; its full sequence is Homeobox protein Hox-A3a (410 aa).

The interval 79-126 (VTDTSDNKQPPTAPSGPSSPSSLNQIPNIDSAAKNPVHVSPTPSTRKH) is disordered. The Antp-type hexapeptide motif lies at 127-132 (IFPWMK). A DNA-binding region (homeobox) is located at residues 163–222 (SKRARTAYTSAQLVELEKEFHFNRYLCRPRRVEMANLLNLTERQIKIWFQNRRMKYKKDQ). Residues 222 to 249 (QKGLGMMPSPGAQSPHSPVSLSSGGGGG) are disordered.

This sequence belongs to the Antp homeobox family.

Its subcellular location is the nucleus. Its function is as follows. Sequence-specific transcription factor which is part of a developmental regulatory system that provides cells with specific positional identities on the anterior-posterior axis. The chain is Homeobox protein Hox-A3a (hoxa3a) from Danio rerio (Zebrafish).